The chain runs to 413 residues: MGQLFSSPKSDENNDLPSSFTGYFKKFNTGRKIISQEILNLIELRMRKGNIQLTNSAISDALKEIDSSVLNVAVTGETGSGKSSFINTLRGIGNEEEGAAKTGVVEVTMERHPYKHPNIPNVVFWDLPGIGSTNFPPNTYLEKMKFYEYDFFIIISATRFKKNDIDIAKAISMMKKEFYFVRTKVDSDITNEADGKPQTFDKEKVLQDIRLNCVNTFRENGIAEPPIFLLSNKNVCHYDFPVLMDKLISDLPIYKRHNFMVSLPNITDSVIEKKRQFLKQRIWLEGFAADLVNIIPSLTFLLDSDLETLKKSMKFYRTVFGVDETSLQRLARDWEIEVDQVEAMIKSPAVFKPTDEETIQERLSRYIQEFCLANGYLLPKNSFLKEIFYLKYYFLDMVTEDAKTLLKEICLRN.

A lipid anchor (N-myristoyl glycine) is attached at G2. The IRG-type G domain occupies 68–250 (SVLNVAVTGE…PVLMDKLISD (183 aa)). Positions 79, 81, 82, 83, 84, 102, and 103 each coordinate GDP. A (Microbial infection) Phosphothreonine; by ROP18 modification is found at T102. T108 is modified ((Microbial infection) Phosphothreonine; by ROP18). 4 residues coordinate GDP: K184, D186, S187, and N232. The cysteines at positions 236 and 410 are disulfide-linked.

Belongs to the TRAFAC class dynamin-like GTPase superfamily. IRG family. As to quaternary structure, monomer, as apoenzyme and in the GDP-bound form. Homooligomer, upon GTP binding. Interacts with HOOK3. (Microbial infection) Interacts with Toxoplasma gondii GRA7 in GTP-dependent manner; the interaction results in faster turnover of the GTP-activated IIGP1 oligomer. Interacts with T.gondii ROP5; the interaction results in inhibition of IRGA6/IIGP1 GTPase activity and oligomerization. In terms of processing, myristoylated. Post-translationally, (Microbial infection) Phosphorylated by Toxoplasma gondii ROP18 from virulent strains.

Its subcellular location is the cytoplasm. The protein resides in the nucleus membrane. It localises to the endoplasmic reticulum membrane. It is found in the golgi apparatus. The protein localises to the golgi stack membrane. Its subcellular location is the parasitophorous vacuole membrane. It catalyses the reaction GTP + H2O = GDP + phosphate + H(+). In terms of biological role, GTPase with low activity. Has higher affinity for GDP than for GTP. Plays a role in resistance to intracellular pathogens. During infection with avirulent Toxoplasma gondii strains, recruited to the parasitophorous vacuole membrane. Required for disruption of the parasitophorous vacuole formed following T.gondii infection and subsequent killing of the parasite. Mediates resistance to Chlamydia trachomatis infection by targeting bacterial inclusions to autophagosomes for subsequent lysosomal destruction. The polypeptide is Interferon-inducible GTPase 1 (Iigp1) (Mus musculus (Mouse)).